The sequence spans 219 residues: ATP-dependent Clp protease proteolytic subunit 3 (219 aa).

Ser112 acts as the Nucleophile in catalysis. His137 is a catalytic residue.

The protein belongs to the peptidase S14 family. Fourteen ClpP subunits assemble into 2 heptameric rings which stack back to back to give a disk-like structure with a central cavity, resembling the structure of eukaryotic proteasomes.

The protein localises to the cytoplasm. It catalyses the reaction Hydrolysis of proteins to small peptides in the presence of ATP and magnesium. alpha-casein is the usual test substrate. In the absence of ATP, only oligopeptides shorter than five residues are hydrolyzed (such as succinyl-Leu-Tyr-|-NHMec, and Leu-Tyr-Leu-|-Tyr-Trp, in which cleavage of the -Tyr-|-Leu- and -Tyr-|-Trp bonds also occurs).. Functionally, cleaves peptides in various proteins in a process that requires ATP hydrolysis. Has a chymotrypsin-like activity. Plays a major role in the degradation of misfolded proteins. This Streptomyces avermitilis (strain ATCC 31267 / DSM 46492 / JCM 5070 / NBRC 14893 / NCIMB 12804 / NRRL 8165 / MA-4680) protein is ATP-dependent Clp protease proteolytic subunit 3.